Consider the following 69-residue polypeptide: MTVKICDCEGECCKDSCHCGSTCLPSCSGGEKCKCDHSTGSPQCKSCGEKCKCETTCTCEKSKCNCEKC.

The protein belongs to the metallothionein superfamily. Type 13 family.

Critical role in copper (specific) homeostasis and detoxification. May protect by directly chelating and sequestering copper ions. This is Metallothionein-like protein CRS5 (CRS5) from Saccharomyces cerevisiae (strain RM11-1a) (Baker's yeast).